The chain runs to 1037 residues: Cysteine-rich motor neuron 1 protein (1037 aa).

Positions 1–34 (MYLVAGGRGLAGCGHLSVSLLGLLLLLARSGTRA) are cleaved as a signal peptide. The region spanning 35–112 (LVCLPCDESK…EYEVGVCEDE (78 aa)) is the IGFBP N-terminal domain. Topologically, residues 35-940 (LVCLPCDESK…HPGEDSSLDS (906 aa)) are extracellular. 6 disulfides stabilise this stretch: cysteine 37–cysteine 60, cysteine 40–cysteine 62, cysteine 45–cysteine 63, cysteine 51–cysteine 66, cysteine 74–cysteine 90, and cysteine 84–cysteine 109. The Cell attachment site motif lies at 314 to 316 (RGD). N-linked (GlcNAc...) asparagine glycosylation is present at asparagine 330. VWFC domains follow at residues 334-391 (PACV…PVCE) and 401-457 (AGCY…PVCE). 4 Antistasin-like domains span residues 469–498 (CGEL…TCQC), 505–532 (CLGL…LCQC), 539–564 (CRPT…ICRC), and 567–592 (CPEL…ICKC). VWFC domains follow at residues 606-663 (GTCL…PSCT), 677-735 (SICH…PQCT), 751-809 (SYCR…PYCL), and 817-874 (VVCH…PMCP). The chain crosses the membrane as a helical span at residues 941–961 (IVSVVVPIIICLSIIIAFLLI). At 962–1037 (NQKKQWVPLL…LQADNFYQTV (76 aa)) the chain is on the cytoplasmic side. The residue at position 1036 (threonine 1036) is a Phosphothreonine.

In terms of assembly, interacts with BMP4 and BMP7. Expressed during embryonic development in brain, kidney, spinal cord, testis, lens, vibrissae, pinna, tooth primordia and in specific regions of the CNS. Expressed in adult lens. Displays male-specific expression in the fetal gonads with the strongest expression in the Sertoli cells of developing testis.

Its subcellular location is the membrane. Its function is as follows. May play a role in CNS development by interacting with growth factors implicated in motor neuron differentiation and survival. May play a role in capillary formation and maintenance during angiogenesis. Modulates BMP activity by affecting its processing and delivery to the cell surface. This is Cysteine-rich motor neuron 1 protein (Crim1) from Mus musculus (Mouse).